A 125-amino-acid chain; its full sequence is Lectin (125 aa).

The 120-residue stretch at 1–120 folds into the C-type lectin domain; it reads MDYEILFSDE…CGGARRVICE (120 aa). 2 cysteine pairs are disulfide-bonded: Cys-21–Cys-119 and Cys-96–Cys-111.

As to quaternary structure, homodimer.

Functionally, role in the defense system of the organism against microorganisms. This calcium-binding lectin binds galactose. This chain is Lectin, found in Polyandrocarpa misakiensis (Tunicate).